The chain runs to 1379 residues: DNA-directed RNA polymerase subunit beta (1379 aa).

Belongs to the RNA polymerase beta chain family. In terms of assembly, the RNAP catalytic core consists of 2 alpha, 1 beta, 1 beta' and 1 omega subunit. When a sigma factor is associated with the core the holoenzyme is formed, which can initiate transcription.

It carries out the reaction RNA(n) + a ribonucleoside 5'-triphosphate = RNA(n+1) + diphosphate. DNA-dependent RNA polymerase catalyzes the transcription of DNA into RNA using the four ribonucleoside triphosphates as substrates. The polypeptide is DNA-directed RNA polymerase subunit beta (Rhizobium leguminosarum bv. trifolii (strain WSM2304)).